The chain runs to 37 residues: Bacteriocin lactococcin MMFII (37 aa).

The cysteines at positions 9 and 14 are disulfide-linked.

The protein localises to the secreted. In terms of biological role, bacteriocin active against Listeria monocytogenes and Lactococcus cremoris. This Lactococcus lactis subsp. lactis (Streptococcus lactis) protein is Bacteriocin lactococcin MMFII.